The primary structure comprises 351 residues: Carbamoyl phosphate synthase small chain (351 aa).

A CPSase region spans residues 1–171 (MKGIIYLEDG…IIHIAGNGNK (171 aa)). L-glutamine-binding residues include serine 45, glycine 219, and glycine 221. In terms of domain architecture, Glutamine amidotransferase type-1 spans 171-351 (KVAVMDFGIK…TYLFDQFVNL (181 aa)). Cysteine 246 functions as the Nucleophile in the catalytic mechanism. Residues leucine 247, glutamine 250, asparagine 288, glycine 290, and tyrosine 291 each coordinate L-glutamine. Catalysis depends on residues histidine 331 and glutamate 333.

Belongs to the CarA family. Composed of two chains; the small (or glutamine) chain promotes the hydrolysis of glutamine to ammonia, which is used by the large (or ammonia) chain to synthesize carbamoyl phosphate. Tetramer of heterodimers (alpha,beta)4.

It catalyses the reaction hydrogencarbonate + L-glutamine + 2 ATP + H2O = carbamoyl phosphate + L-glutamate + 2 ADP + phosphate + 2 H(+). The enzyme catalyses L-glutamine + H2O = L-glutamate + NH4(+). Its pathway is amino-acid biosynthesis; L-arginine biosynthesis; carbamoyl phosphate from bicarbonate: step 1/1. It participates in pyrimidine metabolism; UMP biosynthesis via de novo pathway; (S)-dihydroorotate from bicarbonate: step 1/3. Small subunit of the glutamine-dependent carbamoyl phosphate synthetase (CPSase). CPSase catalyzes the formation of carbamoyl phosphate from the ammonia moiety of glutamine, carbonate, and phosphate donated by ATP, constituting the first step of 2 biosynthetic pathways, one leading to arginine and/or urea and the other to pyrimidine nucleotides. The small subunit (glutamine amidotransferase) binds and cleaves glutamine to supply the large subunit with the substrate ammonia. This chain is Carbamoyl phosphate synthase small chain, found in Clostridium acetobutylicum (strain ATCC 824 / DSM 792 / JCM 1419 / IAM 19013 / LMG 5710 / NBRC 13948 / NRRL B-527 / VKM B-1787 / 2291 / W).